We begin with the raw amino-acid sequence, 216 residues long: Cytidylate kinase (216 aa).

Gly-7–Thr-15 provides a ligand contact to ATP.

Belongs to the cytidylate kinase family. Type 1 subfamily.

The protein resides in the cytoplasm. It catalyses the reaction CMP + ATP = CDP + ADP. The enzyme catalyses dCMP + ATP = dCDP + ADP. The chain is Cytidylate kinase from Chlamydia muridarum (strain MoPn / Nigg).